The primary structure comprises 453 residues: UDP-glycosyltransferase 79B3 (453 aa).

UDP-alpha-D-glucose is bound by residues serine 266, valine 325 to glutamine 327, histidine 342 to glutamate 350, and leucine 364 to glutamine 367.

This sequence belongs to the UDP-glycosyltransferase family.

This Arabidopsis thaliana (Mouse-ear cress) protein is UDP-glycosyltransferase 79B3 (UGT79B3).